We begin with the raw amino-acid sequence, 318 residues long: Porphobilinogen deaminase (318 aa).

Cysteine 245 is modified (S-(dipyrrolylmethanemethyl)cysteine).

The protein belongs to the HMBS family. Monomer. Requires dipyrromethane as cofactor.

It carries out the reaction 4 porphobilinogen + H2O = hydroxymethylbilane + 4 NH4(+). It participates in porphyrin-containing compound metabolism; protoporphyrin-IX biosynthesis; coproporphyrinogen-III from 5-aminolevulinate: step 2/4. It functions in the pathway porphyrin-containing compound metabolism; chlorophyll biosynthesis. In terms of biological role, tetrapolymerization of the monopyrrole PBG into the hydroxymethylbilane pre-uroporphyrinogen in several discrete steps. In Prochlorococcus marinus (strain MIT 9215), this protein is Porphobilinogen deaminase.